The following is a 360-amino-acid chain: SUN domain-containing protein 3 (360 aa).

Positions 1–10 (MSGRPNSRGS) are enriched in polar residues. Residues 1 to 39 (MSGRPNSRGSSRLFRAPSEDASSGSSGSAVLPQEENPNA) form a disordered region. Residues 1-47 (MSGRPNSRGSSRLFRAPSEDASSGSSGSAVLPQEENPNASGLTRSWK) lie on the Nuclear side of the membrane. A helical membrane pass occupies residues 48–67 (AVMGMVFILTLLLLGFINHM). Topologically, residues 68–360 (KLKEKAFPQK…RVHGTPKDDS (293 aa)) are perinuclear space. The stretch at 103-142 (KEQLELLKKESQTLENNFREILFLIEQIDVLKALLRDMQD) forms a coiled coil. Residues 196-357 (GASVVEAGTS…YRFRVHGTPK (162 aa)) enclose the SUN domain.

Self-associates. Interacts with SYNE1 and SPAG4/SUN4. Proposed to form a spermatogenesis-specific LINC complex with SYNE1 during sperm head formation possibly implicating a SUN domain-based heterotrimer with SPAG4/SUN4 associating with SYNE1.

The protein localises to the membrane. It localises to the nucleus envelope. Its subcellular location is the nucleus inner membrane. Its function is as follows. As a probable component of the LINC (LInker of Nucleoskeleton and Cytoskeleton) complex, involved in the connection between the nuclear lamina and the cytoskeleton. The nucleocytoplasmic interactions established by the LINC complex play an important role in the transmission of mechanical forces across the nuclear envelope and in nuclear movement and positioning. May be involved in nuclear remodeling during sperm head formation in spermatogenesis. A probable SUN3:SYNE1 LINC complex may tether spermatid nuclei to posterior cytoskeletal structures such as the manchette. The chain is SUN domain-containing protein 3 (SUN3) from Bos taurus (Bovine).